Reading from the N-terminus, the 379-residue chain is Ribosomal RNA large subunit methyltransferase G (379 aa).

The protein belongs to the methyltransferase superfamily. RlmG family.

Its subcellular location is the cytoplasm. The enzyme catalyses guanosine(1835) in 23S rRNA + S-adenosyl-L-methionine = N(2)-methylguanosine(1835) in 23S rRNA + S-adenosyl-L-homocysteine + H(+). Specifically methylates the guanine in position 1835 (m2G1835) of 23S rRNA. This is Ribosomal RNA large subunit methyltransferase G from Pectobacterium atrosepticum (strain SCRI 1043 / ATCC BAA-672) (Erwinia carotovora subsp. atroseptica).